Here is a 351-residue protein sequence, read N- to C-terminus: Basic salivary proline-rich protein 3 (351 aa).

An N-terminal signal peptide occupies residues 1–16 (MLLILLSVALLALSSA). Pyrrolidone carboxylic acid is present on Gln-17. Residues 17–351 (QSLNEDVSQE…HRPPQGQPPQ (335 aa)) form a disordered region. A compositionally biased stretch (polar residues) spans 20–31 (NEDVSQEESPSV). Ser-24 carries the post-translational modification Phosphoserine. Tandem repeats lie at residues 53 to 73 (PPGKPEGRPPQGGNQSQGPPP), 74 to 94 (RPGKPEGPPPQGGNQSQGPPP), 95 to 115 (RPGKPEGQPPQGGNQSQGPPP), 116 to 136 (RPGKPEGPPPQGGNQSQGPPP), 137 to 157 (RPGKPEGPPPQGGNQSQGPPP), 158 to 178 (RPGKPEGPPPQGGNQSQGPPP), 179 to 199 (HPGKPEGPPPQGGNQSQGPPP), 200 to 220 (RPGKPEGPPPQGGNQSQGPPP), 221 to 241 (RPGKPEGPPPQGGNKPQGPPP), 242 to 261 (RPGKPEGPPPQGGNQSQGPP), 263 to 283 (RPGKPEGPPSQGGNKPQGPPP), and 284 to 304 (HPGKPQGPPPQEGNKPQRPPP). The segment at 53-304 (PPGKPEGRPP…EGNKPQRPPP (252 aa)) is 12 X 21 AA tandem repeats of [RHP]-P-G-K-P-[EQ]-G-[PQS]-P-[PS]-Q-[GE]-G-N-[QK]-[SP]-[QR]-[GR]-P-P-P. A glycan (N-linked (GlcNAc...) asparagine) is linked at Asn-66. Residues 70 to 84 (GPPPRPGKPEGPPPQ) show a composition bias toward pro residues. N-linked (GlcNAc...) asparagine glycosylation is present at Asn-87. An O-linked (Hex) serine glycan is attached at Ser-89. Residues 99–111 (PEGQPPQGGNQSQ) show a composition bias toward low complexity. N-linked (GlcNAc...) asparagine glycosylation is present at Asn-108. Positions 112–126 (GPPPRPGKPEGPPPQ) are enriched in pro residues. An N-linked (GlcNAc...) asparagine glycan is attached at Asn-129. Pro residues predominate over residues 133–147 (GPPPRPGKPEGPPPQ). An N-linked (GlcNAc...) asparagine glycan is attached at Asn-150. 2 stretches are compositionally biased toward pro residues: residues 154 to 168 (GPPPRPGKPEGPPPQ) and 175 to 189 (GPPPHPGKPEGPPPQ). Asn-192 is a glycosylation site (N-linked (GlcNAc...) asparagine). Over residues 196–210 (GPPPRPGKPEGPPPQ) the composition is skewed to pro residues. Asn-213 and Asn-234 each carry an N-linked (GlcNAc...) asparagine glycan. Pro residues-rich tracts occupy residues 217–252 (GPPPRPGKPEGPPPQGGNKPQGPPPRPGKPEGPPPQ), 259–270 (GPPPRPGKPEGP), and 279–351 (QGPP…QPPQ). Asn-297 carries N-linked (Hex) asparagine; atypical glycosylation.

Post-translationally, N- and O-glycosylated; contains about 50% carbohydrate. This is composed of highly fucosylated N-linked saccharides, the major structure is a biantennary asialosaccharide containing 2 fucose residues on one antenna and an unsubstituted terminal lactosamine sequence on the other. The Gram-negative bacterium F.nucleatum binds to carbohydrates containing unsubstituted GalBeta1,4GlcNAc residues. N-glycosylation on Asn-87 is prevalent in head and neck cancer patients. Proteolytically cleaved at the tripeptide Xaa-Pro-Gln, where Xaa in the P(3) position is mostly lysine. The endoprotease may be of microbial origin. Besides on the N-terminal of mature PRB3, pyroglutamate formation found on at least Gln-67, Gln-88, Gln-256 and Gln-337.

The protein resides in the secreted. Functionally, acts as a receptor for the Gram-negative bacterium F.nucleatum. This chain is Basic salivary proline-rich protein 3 (PRB3), found in Homo sapiens (Human).